We begin with the raw amino-acid sequence, 121 residues long: MARIAGINIPPHKHAEIGLTSIYGVGRTTAQKICEACGIAYNKKVKDLDDSDLEKIREEVGRLTIEGDLRREISINIKRLMDLGCYRGFRHRRGLPVRGQRTRTNSRTRKGPKKGAAALKK.

The interval 94 to 121 (GLPVRGQRTRTNSRTRKGPKKGAAALKK) is disordered.

It belongs to the universal ribosomal protein uS13 family. In terms of assembly, part of the 30S ribosomal subunit. Forms a loose heterodimer with protein S19. Forms two bridges to the 50S subunit in the 70S ribosome.

Its function is as follows. Located at the top of the head of the 30S subunit, it contacts several helices of the 16S rRNA. In the 70S ribosome it contacts the 23S rRNA (bridge B1a) and protein L5 of the 50S subunit (bridge B1b), connecting the 2 subunits; these bridges are implicated in subunit movement. Contacts the tRNAs in the A and P-sites. This Leptothrix cholodnii (strain ATCC 51168 / LMG 8142 / SP-6) (Leptothrix discophora (strain SP-6)) protein is Small ribosomal subunit protein uS13.